The chain runs to 299 residues: Recombination-associated protein RdgC (299 aa).

The protein belongs to the RdgC family.

The protein resides in the cytoplasm. Its subcellular location is the nucleoid. Its function is as follows. May be involved in recombination. The chain is Recombination-associated protein RdgC from Laribacter hongkongensis (strain HLHK9).